We begin with the raw amino-acid sequence, 107 residues long: MQFKVLAALVIGATLAAATGSPSNQCNTGSLQCCNSTGSATDPAIAKLFALLGINVEDVTALVGVTCSPITVVGASGSSCSEQPVCCTNDSFNGIVALGCAPINLNL.

The signal sequence occupies residues 1–18 (MQFKVLAALVIGATLAAA). 4 disulfides stabilise this stretch: Cys26–Cys86, Cys33–Cys80, Cys34–Cys67, and Cys87–Cys100. Asn35 and Asn89 each carry an N-linked (GlcNAc...) asparagine glycan.

It belongs to the fungal hydrophobin family. As to quaternary structure, self-assembles to form functional amyloid fibrils called rodlets. Self-assembly into fibrillar rodlets occurs spontaneously at hydrophobic:hydrophilic interfaces and the rodlets further associate laterally to form amphipathic monolayers.

Its subcellular location is the secreted. It localises to the cell wall. Aerial growth, conidiation, and dispersal of filamentous fungi in the environment rely upon a capability of their secreting small amphipathic proteins called hydrophobins (HPBs) with low sequence identity. Class I can self-assemble into an outermost layer of rodlet bundles on aerial cell surfaces, conferring cellular hydrophobicity that supports fungal growth, development and dispersal; whereas Class II form highly ordered films at water-air interfaces through intermolecular interactions but contribute nothing to the rodlet structure. Pnh3 is a class I hydrophobin that might be involved in the attachment of the hydrophilic wall of hyphae to the hydrophobic surface of wood under inorganic phosphate (Pi)-deficient conditions and enable the mycelium to degrade efficiently the components of wood and to acquire nutrients containing Pi. In Pholiota nameko, this protein is Class I hydrophobin 3.